A 497-amino-acid chain; its full sequence is NAD(P)H-quinone oxidoreductase chain 4, chloroplastic (497 aa).

Helical transmembrane passes span 5 to 25 (VPWL…IPIL), 36 to 56 (YTLG…YCHF), 88 to 108 (LGLV…AWPI), 112 to 132 (TRLF…LFVS), 135 to 155 (ILLF…LLCL), 168 to 188 (FVLY…TMSF), 212 to 232 (VLIY…FPFH), 243 to 263 (HYST…YGLI), 275 to 295 (FLLG…ASLI), 306 to 326 (IAYS…SFTE), 331 to 351 (GAIL…FLAG), 387 to 407 (LALP…GVVT), 418 to 438 (GITV…LSML), and 463 to 483 (LFIL…PNLI).

The protein belongs to the complex I subunit 4 family.

The protein localises to the plastid. Its subcellular location is the chloroplast thylakoid membrane. The catalysed reaction is a plastoquinone + NADH + (n+1) H(+)(in) = a plastoquinol + NAD(+) + n H(+)(out). It carries out the reaction a plastoquinone + NADPH + (n+1) H(+)(in) = a plastoquinol + NADP(+) + n H(+)(out). The sequence is that of NAD(P)H-quinone oxidoreductase chain 4, chloroplastic from Adiantum capillus-veneris (Maidenhair fern).